A 310-amino-acid chain; its full sequence is Cytochrome f (310 aa).

A signal peptide spans 1–23 (MRRLLSSTFAALIVGLAVFSAPA). 4 residues coordinate heme: Tyr28, Cys48, Cys51, and His52. A helical transmembrane segment spans residues 277-297 (IYGMLAFFAAVALAQIMLVLK).

It belongs to the cytochrome f family. In terms of assembly, the 4 large subunits of the cytochrome b6-f complex are cytochrome b6, subunit IV (17 kDa polypeptide, PetD), cytochrome f and the Rieske protein, while the 4 small subunits are PetG, PetL, PetM and PetN. The complex functions as a dimer. Heme serves as cofactor.

The protein localises to the cellular thylakoid membrane. Component of the cytochrome b6-f complex, which mediates electron transfer between photosystem II (PSII) and photosystem I (PSI), cyclic electron flow around PSI, and state transitions. The polypeptide is Cytochrome f (Synechococcus sp. (strain CC9311)).